A 117-amino-acid chain; its full sequence is DNA-directed RNA polymerase II subunit RPB11 (117 aa).

M1 carries the N-acetylmethionine modification.

This sequence belongs to the archaeal Rpo11/eukaryotic RPB11/RPC19 RNA polymerase subunit family. In terms of assembly, component of the RNA polymerase II (Pol II) core complex consisting of 12 subunits: a ten-subunit catalytic core composed of POLR2A/RPB1, POLR2B/RPB2, POLR2C/RPB3, POLR2I/RPB9, POLR2J/RPB11, POLR2E/RPABC1, POLR2F/RPABC2, POLR2H/RPABC3, POLR2K/RPABC4 and POLR2L/RPABC5 and a mobile stalk composed of two subunits POLR2D/RPB4 and POLR2G/RPB7, protruding from the core and functioning primarily in transcription initiation. Part of Pol II(G) complex, in which Pol II core associates with an additional subunit POLR2M; unlike conventional Pol II, Pol II(G) functions as a transcriptional repressor. Part of TBP-based Pol II pre-initiation complex (PIC), in which Pol II core assembles with general transcription factors and other specific initiation factors including GTF2E1, GTF2E2, GTF2F1, GTF2F2, TCEA1, ERCC2, ERCC3, GTF2H2, GTF2H3, GTF2H4, GTF2H5, GTF2A1, GTF2A2, GTF2B and TBP; this large multi-subunit PIC complex mediates DNA unwinding and targets Pol II core to the transcription start site where the first phosphodiester bond forms. Interacts with PTPN6; this interaction promotes the recruitment of RNA pol II to the PCK1 promoter.

It is found in the nucleus. Functionally, DNA-dependent RNA polymerase catalyzes the transcription of DNA into RNA using the four ribonucleoside triphosphates as substrates. Component of RNA polymerase II which synthesizes mRNA precursors and many functional non-coding RNAs. Pol II is the central component of the basal RNA polymerase II transcription machinery. It is composed of mobile elements that move relative to each other. POLR2J/RPB11 is part of the core element with the central large cleft. This chain is DNA-directed RNA polymerase II subunit RPB11 (POLR2J), found in Bos taurus (Bovine).